Here is a 139-residue protein sequence, read N- to C-terminus: Small ribosomal subunit protein uS11 (139 aa).

The segment at 118-139 (EDVTPIPHDGTRPKGGRRGRRV) is disordered.

It belongs to the universal ribosomal protein uS11 family. In terms of assembly, part of the 30S ribosomal subunit.

Its function is as follows. Located on the platform of the 30S subunit. This Thermococcus sibiricus (strain DSM 12597 / MM 739) protein is Small ribosomal subunit protein uS11.